The following is a 549-amino-acid chain: Glucose-6-phosphate isomerase (549 aa).

Glutamate 355 serves as the catalytic Proton donor. Residues histidine 386 and lysine 514 contribute to the active site.

The protein belongs to the GPI family.

The protein localises to the cytoplasm. It catalyses the reaction alpha-D-glucose 6-phosphate = beta-D-fructose 6-phosphate. The protein operates within carbohydrate biosynthesis; gluconeogenesis. It functions in the pathway carbohydrate degradation; glycolysis; D-glyceraldehyde 3-phosphate and glycerone phosphate from D-glucose: step 2/4. Catalyzes the reversible isomerization of glucose-6-phosphate to fructose-6-phosphate. The chain is Glucose-6-phosphate isomerase from Pectobacterium carotovorum subsp. carotovorum (strain PC1).